The sequence spans 326 residues: Beta-ketoacyl-[acyl-carrier-protein] synthase III (326 aa).

Catalysis depends on residues Cys-120 and His-253. Residues 254 to 258 (QANIR) are ACP-binding. Asn-283 is an active-site residue.

Belongs to the thiolase-like superfamily. FabH family. Homodimer.

Its subcellular location is the cytoplasm. It catalyses the reaction malonyl-[ACP] + acetyl-CoA + H(+) = 3-oxobutanoyl-[ACP] + CO2 + CoA. It functions in the pathway lipid metabolism; fatty acid biosynthesis. Functionally, catalyzes the condensation reaction of fatty acid synthesis by the addition to an acyl acceptor of two carbons from malonyl-ACP. Catalyzes the first condensation reaction which initiates fatty acid synthesis and may therefore play a role in governing the total rate of fatty acid production. Possesses both acetoacetyl-ACP synthase and acetyl transacylase activities. Its substrate specificity determines the biosynthesis of branched-chain and/or straight-chain of fatty acids. The protein is Beta-ketoacyl-[acyl-carrier-protein] synthase III of Cupriavidus taiwanensis (strain DSM 17343 / BCRC 17206 / CCUG 44338 / CIP 107171 / LMG 19424 / R1) (Ralstonia taiwanensis (strain LMG 19424)).